Here is a 233-residue protein sequence, read N- to C-terminus: Chaperone protein MrkB (233 aa).

A signal peptide spans 1–18 (MKRIALFFCFIFSFAAHA).

The protein belongs to the periplasmic pilus chaperone family.

The protein localises to the periplasm. In terms of biological role, mediates assembly of pili by forming soluble multimeric complexes with pili subunits as an intermediate step in the assembly process. This protein is involved in type 3 pili assembly. This is Chaperone protein MrkB (mrkB) from Klebsiella pneumoniae.